A 247-amino-acid chain; its full sequence is tRNA uridine(34) hydroxylase (247 aa).

Positions 124-218 (TKQNVIVIDT…YLEDTHNKNN (95 aa)) constitute a Rhodanese domain. The Cysteine persulfide intermediate role is filled by cysteine 178.

Belongs to the TrhO family.

The enzyme catalyses uridine(34) in tRNA + AH2 + O2 = 5-hydroxyuridine(34) in tRNA + A + H2O. Its function is as follows. Catalyzes oxygen-dependent 5-hydroxyuridine (ho5U) modification at position 34 in tRNAs. The sequence is that of tRNA uridine(34) hydroxylase from Rickettsia typhi (strain ATCC VR-144 / Wilmington).